The following is a 79-amino-acid chain: UPF0291 protein lp_2062 (79 aa).

The protein belongs to the UPF0291 family.

It is found in the cytoplasm. This chain is UPF0291 protein lp_2062, found in Lactiplantibacillus plantarum (strain ATCC BAA-793 / NCIMB 8826 / WCFS1) (Lactobacillus plantarum).